The chain runs to 658 residues: Methionine--tRNA ligase (658 aa).

Residues 9–19 (PYANGKAHVGH) carry the 'HIGH' region motif. Zn(2+) contacts are provided by Cys140, Cys143, Cys152, and Cys156. Positions 322–326 (TFSKS) match the 'KMSKS' region motif. Residue Lys325 coordinates ATP. Residues 558–658 (DFQKLDIRIG…KEVEPGTRVC (101 aa)) form the tRNA-binding domain.

The protein belongs to the class-I aminoacyl-tRNA synthetase family. MetG type 1 subfamily. In terms of assembly, homodimer. Requires Zn(2+) as cofactor.

Its subcellular location is the cytoplasm. The enzyme catalyses tRNA(Met) + L-methionine + ATP = L-methionyl-tRNA(Met) + AMP + diphosphate. Its function is as follows. Is required not only for elongation of protein synthesis but also for the initiation of all mRNA translation through initiator tRNA(fMet) aminoacylation. This Archaeoglobus fulgidus (strain ATCC 49558 / DSM 4304 / JCM 9628 / NBRC 100126 / VC-16) protein is Methionine--tRNA ligase.